Here is an 833-residue protein sequence, read N- to C-terminus: cGMP-specific 3',5'-cyclic phosphodiesterase (833 aa).

Phosphoserine is present on S60. The interval 82–101 is disordered; the sequence is FLSDSGKKEQMPLTSPRFDS. GAF domains are found at residues 122–272 and 304–461; these read DVTA…GIVL and SLEV…GLGI. A PDEase domain is found at 494–818; that stretch reads ETRELQALAA…QKWQALADQQ (325 aa). Catalysis depends on H571, which acts as the Proton donor. Residues H575, H611, D612, and D722 each coordinate Zn(2+). Position 612 (D612) interacts with Mg(2+). Q775 provides a ligand contact to 3',5'-cyclic GMP.

Belongs to the cyclic nucleotide phosphodiesterase family. Zn(2+) is required as a cofactor. It depends on Mg(2+) as a cofactor. Post-translationally, phosphorylation is regulated by binding of cGMP to the two allosteric sites. Phosphorylation by PRKG1 leads to its activation.

It carries out the reaction 3',5'-cyclic GMP + H2O = GMP + H(+). The protein operates within purine metabolism; 3',5'-cyclic GMP degradation; GMP from 3',5'-cyclic GMP: step 1/1. Its function is as follows. Plays a role in signal transduction by regulating the intracellular concentration of cyclic nucleotides. This phosphodiesterase catalyzes the specific hydrolysis of cGMP to 5'-GMP. Specifically regulates nitric-oxide-generated cGMP. This is cGMP-specific 3',5'-cyclic phosphodiesterase (Pde5a) from Rattus norvegicus (Rat).